The sequence spans 1922 residues: Endoribonuclease Dicer (1922 aa).

The 177-residue stretch at 51–227 (LLEAALDHNT…ELEEKIQKLE (177 aa)) folds into the Helicase ATP-binding domain. 64-71 (LNTGSGKT) contributes to the ATP binding site. The short motif at 175 to 178 (DECH) is the DECH box element. Residues 256–595 (DCGPFTDRSG…LRNKCSKSVD (340 aa)) form a required for interaction with PRKRA and TARBP2 region. The segment at 409–433 (YVSWSDSEDDDEDEEIEEKEKPETN) is disordered. Serine 413 and serine 415 each carry phosphoserine. The segment covering 414–425 (DSEDDDEDEEIE) has biased composition (acidic residues). Residues 433–602 (NFPSPFTNIL…SVDTGETDID (170 aa)) form the Helicase C-terminal domain. The Dicer dsRNA-binding fold domain occupies 630-722 (AIGHINRYCA…MPVGKETVKY (93 aa)). One can recognise a PAZ domain in the interval 895-1042 (KFMEDIEKSE…LVPELCAIHP (148 aa)). Phosphoserine occurs at positions 1016 and 1160. In terms of domain architecture, RNase III 1 spans 1276 to 1403 (DSEQSPSIGY…TDKWEKDEMT (128 aa)). 3 residues coordinate Mg(2+): glutamate 1316, aspartate 1395, and glutamate 1398. Phosphoserine occurs at positions 1460, 1468, and 1470. The region spanning 1666 to 1824 (FENFEKKINY…LAGAIYMDSG (159 aa)) is the RNase III 2 domain. Residues glutamate 1705, aspartate 1810, and glutamate 1813 each coordinate Mg(2+). Residues 1849 to 1914 (VPRSPVRELL…ARRALRSLKA (66 aa)) form the DRBM domain. Serine 1868 is subject to Phosphoserine.

Belongs to the helicase family. Dicer subfamily. In terms of assembly, component of the RISC loading complex (RLC), or micro-RNA (miRNA) loading complex (miRLC), which is composed of DICER1, AGO2 and TARBP2; DICER1 and TARBP2 are required to process precursor miRNAs (pre-miRNAs) to mature miRNAs and then load them onto AGO2. Note that the trimeric RLC/miRLC is also referred to as RISC. Interacts with DHX9, AGO1, PIWIL1 and PRKRA. Associates with the 60S ribosome. Interacts with BCDIN3D. Interacts with AGO2, TARBP2, EIF6, MOV10 and RPL7A (60S ribosome subunit); they form a large RNA-induced silencing complex (RISC). Interacts (via Dicer dsRNA-binding fold domain) with ALOX5 (via PLAT domain); this interaction enhances arachidonate 5-lipoxygenase activity and modifies the miRNA precursor processing activity of DICER1. As to quaternary structure, (Microbial infection) Interacts with ebolavirus transcriptional activator VP30; this interaction prevents TARBP2/TRBP binding to DICER1 and thus allows the virus to counteract host RNA silencing. (Microbial infection) Interacts with ebolavirus transcriptional activator VP35; this interaction prevents TARBP2/TRBP binding to DICER1 and thus allows the virus to counteract host RNA silencing. The cofactor is Mg(2+). It depends on Mn(2+) as a cofactor.

Its subcellular location is the cytoplasm. The protein resides in the perinuclear region. The catalysed reaction is Endonucleolytic cleavage to 5'-phosphomonoester.. Functionally, double-stranded RNA (dsRNA) endoribonuclease playing a central role in short dsRNA-mediated post-transcriptional gene silencing. Cleaves naturally occurring long dsRNAs and short hairpin pre-microRNAs (miRNA) into fragments of twenty-one to twenty-three nucleotides with 3' overhang of two nucleotides, producing respectively short interfering RNAs (siRNA) and mature microRNAs. SiRNAs and miRNAs serve as guide to direct the RNA-induced silencing complex (RISC) to complementary RNAs to degrade them or prevent their translation. Gene silencing mediated by siRNAs, also called RNA interference, controls the elimination of transcripts from mobile and repetitive DNA elements of the genome but also the degradation of exogenous RNA of viral origin for instance. The miRNA pathway on the other side is a mean to specifically regulate the expression of target genes. This is Endoribonuclease Dicer (DICER1) from Homo sapiens (Human).